A 181-amino-acid polypeptide reads, in one-letter code: ATP-dependent protease subunit HslV (181 aa).

Residue Thr-7 is part of the active site. Positions 166, 169, and 172 each coordinate Na(+).

It belongs to the peptidase T1B family. HslV subfamily. As to quaternary structure, a double ring-shaped homohexamer of HslV is capped on each side by a ring-shaped HslU homohexamer. The assembly of the HslU/HslV complex is dependent on binding of ATP.

It is found in the cytoplasm. The enzyme catalyses ATP-dependent cleavage of peptide bonds with broad specificity.. Its activity is regulated as follows. Allosterically activated by HslU binding. In terms of biological role, protease subunit of a proteasome-like degradation complex believed to be a general protein degrading machinery. The sequence is that of ATP-dependent protease subunit HslV from Variovorax paradoxus (strain S110).